Here is a 140-residue protein sequence, read N- to C-terminus: Mercuric transport protein MerC (140 aa).

Topologically, residues 2–10 are cytoplasmic; sequence GLMTRIADK. The chain crosses the membrane as a helical span at residues 11–31; it reads TGALGSVVSAMGCAACFPALA. Positions 22 and 25 each coordinate Hg(2+). The Periplasmic portion of the chain corresponds to 32 to 46; it reads SFGAAIGLGFLSQYE. The helical transmembrane segment at 47–67 threads the bilayer; that stretch reads GLFISRLLPLFAALAFLANAL. Residues 68 to 78 lie on the Cytoplasmic side of the membrane; sequence GWFSHRQWLRS. The chain crosses the membrane as a helical span at residues 79-99; sequence LLGMIGPAIVFAATVWLLGNW. At 100–106 the chain is on the periplasmic side; the sequence is WTANLMY. The helical transmembrane segment at 107–127 threads the bilayer; it reads VGLALMIGVSIWDFVSPAHRR. Topologically, residues 128–140 are cytoplasmic; it reads CGPDGCELPAKRL.

It localises to the cell inner membrane. Its activity is regulated as follows. Uptake of Hg(2+) is decreased by iodoacetamide and iodoacetate, and is completely inhibited by the thiol-modifying reagent N-ethylmaleimide (NEM). In terms of biological role, involved in mercuric ion uptake and binding. MerC-mediated Hg(2+) uptake does not require MerP. This is Mercuric transport protein MerC from Shigella flexneri.